The sequence spans 478 residues: Protein nucleotidyltransferase YdiU (478 aa).

Glycine 84, glycine 86, arginine 87, lysine 107, aspartate 119, glycine 120, arginine 170, and arginine 177 together coordinate ATP. The Proton acceptor role is filled by aspartate 246. Mg(2+)-binding residues include asparagine 247 and aspartate 256. Aspartate 256 contributes to the ATP binding site.

It belongs to the SELO family. Requires Mg(2+) as cofactor. The cofactor is Mn(2+).

The catalysed reaction is L-seryl-[protein] + ATP = 3-O-(5'-adenylyl)-L-seryl-[protein] + diphosphate. The enzyme catalyses L-threonyl-[protein] + ATP = 3-O-(5'-adenylyl)-L-threonyl-[protein] + diphosphate. It carries out the reaction L-tyrosyl-[protein] + ATP = O-(5'-adenylyl)-L-tyrosyl-[protein] + diphosphate. It catalyses the reaction L-histidyl-[protein] + UTP = N(tele)-(5'-uridylyl)-L-histidyl-[protein] + diphosphate. The catalysed reaction is L-seryl-[protein] + UTP = O-(5'-uridylyl)-L-seryl-[protein] + diphosphate. The enzyme catalyses L-tyrosyl-[protein] + UTP = O-(5'-uridylyl)-L-tyrosyl-[protein] + diphosphate. In terms of biological role, nucleotidyltransferase involved in the post-translational modification of proteins. It can catalyze the addition of adenosine monophosphate (AMP) or uridine monophosphate (UMP) to a protein, resulting in modifications known as AMPylation and UMPylation. This is Protein nucleotidyltransferase YdiU from Escherichia coli O17:K52:H18 (strain UMN026 / ExPEC).